The sequence spans 122 residues: UPF0145 protein TV0671 (122 aa).

This sequence belongs to the UPF0145 family.

The chain is UPF0145 protein TV0671 from Thermoplasma volcanium (strain ATCC 51530 / DSM 4299 / JCM 9571 / NBRC 15438 / GSS1).